The following is a 179-amino-acid chain: Endoribonuclease YbeY (179 aa).

Positions 148, 152, and 158 each coordinate Zn(2+).

Belongs to the endoribonuclease YbeY family. The cofactor is Zn(2+).

The protein localises to the cytoplasm. Functionally, single strand-specific metallo-endoribonuclease involved in late-stage 70S ribosome quality control and in maturation of the 3' terminus of the 16S rRNA. In Prochlorococcus marinus (strain MIT 9312), this protein is Endoribonuclease YbeY.